Reading from the N-terminus, the 612-residue chain is Alpha-1,3-galactosidase B (612 aa).

Residues 1–19 (MKWYLWGAVVLLYSLFGSA) form the signal peptide. Cys20 carries N-palmitoyl cysteine lipidation. Residue Cys20 is the site of S-diacylglycerol cysteine attachment. PbH1 repeat units lie at residues 431–453 (TPTVLFSDNLIRNNRARGSLFST), 454–476 (PRQTVVENNVFDHTSGTAILLCG), and 487–536 (CRNV…VIDA).

This sequence belongs to the glycosyl hydrolase 110 family. B subfamily.

It is found in the cell membrane. The enzyme catalyses Hydrolysis of terminal, non-reducing branched (1-&gt;3)-alpha-D-galactosidic residues, producing free D-galactose.. It carries out the reaction Hydrolysis of terminal, non-reducing linear (1-&gt;3)-alpha-D-galactosidic residues, producing free D-galactose.. The catalysed reaction is Hydrolysis of terminal, non-reducing alpha-D-galactose residues in alpha-D-galactosides, including galactose oligosaccharides, galactomannans and galactolipids.. Alpha-galactosidase. Removes both branched alpha-1,3-linked galactose residues of blood group B antigens and linear alpha-1,3-linked galactose structures. This is Alpha-1,3-galactosidase B (glaB) from Parabacteroides distasonis (strain ATCC 8503 / DSM 20701 / CIP 104284 / JCM 5825 / NCTC 11152).